A 272-amino-acid polypeptide reads, in one-letter code: Diaminopimelate epimerase (272 aa).

Residues Asn11 and Asn63 each contribute to the substrate site. Cys72 acts as the Proton donor in catalysis. Substrate-binding positions include 73–74 (GN), Asn190, and 208–209 (ER). Cys217 serves as the catalytic Proton acceptor. 218–219 (GT) lines the substrate pocket.

Belongs to the diaminopimelate epimerase family. As to quaternary structure, homodimer.

It is found in the cytoplasm. The catalysed reaction is (2S,6S)-2,6-diaminopimelate = meso-2,6-diaminopimelate. The protein operates within amino-acid biosynthesis; L-lysine biosynthesis via DAP pathway; DL-2,6-diaminopimelate from LL-2,6-diaminopimelate: step 1/1. In terms of biological role, catalyzes the stereoinversion of LL-2,6-diaminopimelate (L,L-DAP) to meso-diaminopimelate (meso-DAP), a precursor of L-lysine and an essential component of the bacterial peptidoglycan. The polypeptide is Diaminopimelate epimerase (Clostridium perfringens (strain 13 / Type A)).